The following is a 294-amino-acid chain: 4-hydroxy-tetrahydrodipicolinate synthase (294 aa).

Residue threonine 45 participates in pyruvate binding. Tyrosine 133 (proton donor/acceptor) is an active-site residue. The active-site Schiff-base intermediate with substrate is the lysine 161. Isoleucine 203 is a binding site for pyruvate.

The protein belongs to the DapA family. As to quaternary structure, homotetramer; dimer of dimers.

The protein localises to the cytoplasm. The catalysed reaction is L-aspartate 4-semialdehyde + pyruvate = (2S,4S)-4-hydroxy-2,3,4,5-tetrahydrodipicolinate + H2O + H(+). It participates in amino-acid biosynthesis; L-lysine biosynthesis via DAP pathway; (S)-tetrahydrodipicolinate from L-aspartate: step 3/4. Catalyzes the condensation of (S)-aspartate-beta-semialdehyde [(S)-ASA] and pyruvate to 4-hydroxy-tetrahydrodipicolinate (HTPA). The polypeptide is 4-hydroxy-tetrahydrodipicolinate synthase (Shewanella sp. (strain W3-18-1)).